The following is a 145-amino-acid chain: uncharacterized protein (145 aa).

The segment covering 1-18 (MAEQQPSKEEKKEDKKDE) has biased composition (basic and acidic residues). A disordered region spans residues 1–61 (MAEQQPSKEE…CTEGEWDASD (61 aa)).

This is an uncharacterized protein from Caenorhabditis elegans.